We begin with the raw amino-acid sequence, 53 residues long: Light-harvesting protein B-808/866 beta chain (53 aa).

Methionine 1 is modified (N-formylmethionine). Residues 1-25 (MRDDDDLVPPKWRPLFNNQDWLLHD) lie on the Cytoplasmic side of the membrane. Residues histidine 24 and histidine 42 each coordinate a bacteriochlorophyll. A helical membrane pass occupies residues 26-48 (IVVKSFYGFGVIAAIAHLLVYLW). Topologically, residues 49-53 (KPWLP) are periplasmic.

The protein belongs to the antenna complex beta subunit family. In terms of assembly, the core complex is formed by different alpha and beta chains, binding bacteriochlorophyll molecules, and arranged most probably in tetrameric structures disposed around the reaction center. The non-pigmented gamma chains may constitute additional components.

The protein resides in the cell membrane. Antenna complexes are light-harvesting systems, which transfer the excitation energy to the reaction centers. This is Light-harvesting protein B-808/866 beta chain (puf2B) from Chloroflexus aurantiacus (strain ATCC 29366 / DSM 635 / J-10-fl).